The sequence spans 49 residues: Defensin Tk-AMP-D2 (49 aa).

Disulfide bonds link Cys3–Cys49, Cys14–Cys34, Cys20–Cys43, and Cys24–Cys45.

In terms of biological role, plant defense peptide. This chain is Defensin Tk-AMP-D2, found in Triticum kiharae (Wheat).